The following is a 288-amino-acid chain: Polyamine aminopropyltransferase (288 aa).

Residues 9 to 242 (SGWLDEYHQG…GLWSWAFASM (234 aa)) form the PABS domain. Glutamine 36 serves as a coordination point for S-methyl-5'-thioadenosine. The spermidine site is built by histidine 67 and aspartate 91. Residues glutamate 111 and 143–144 (NG) contribute to the S-methyl-5'-thioadenosine site. Aspartate 162 (proton acceptor) is an active-site residue. Proline 169 provides a ligand contact to S-methyl-5'-thioadenosine.

This sequence belongs to the spermidine/spermine synthase family. In terms of assembly, homodimer or homotetramer.

The protein localises to the cytoplasm. It catalyses the reaction S-adenosyl 3-(methylsulfanyl)propylamine + putrescine = S-methyl-5'-thioadenosine + spermidine + H(+). The protein operates within amine and polyamine biosynthesis; spermidine biosynthesis; spermidine from putrescine: step 1/1. Functionally, catalyzes the irreversible transfer of a propylamine group from the amino donor S-adenosylmethioninamine (decarboxy-AdoMet) to putrescine (1,4-diaminobutane) to yield spermidine. This chain is Polyamine aminopropyltransferase, found in Prochlorococcus marinus (strain NATL1A).